The following is a 402-amino-acid chain: Proline-rich protein 25 (402 aa).

3 disordered regions span residues 1-29 (MARTDQKPPCRGGCWGQPGHPNTGGAAAH), 109-255 (TVPG…MVGS), and 337-371 (EAAQDPATRRTAPPRRTASPEPPAPGAPLPACPGR). Residues 345 to 355 (RRTAPPRRTAS) are compositionally biased toward low complexity. A compositionally biased stretch (pro residues) spans 356–367 (PEPPAPGAPLPA).

This chain is Proline-rich protein 25 (PRR25), found in Homo sapiens (Human).